We begin with the raw amino-acid sequence, 484 residues long: Chromosomal replication initiator protein DnaA (484 aa).

Residues 1 to 73 (MQEGKNIWSL…EILIEKGHNT (73 aa)) form a domain I, interacts with DnaA modulators region. A domain II region spans residues 73-140 (TINVEFINSP…EEIHTKYRNP (68 aa)). The interval 141 to 357 (FLKKKYTFEN…AAVTKLKAHI (217 aa)) is domain III, AAA+ region. Positions 185, 187, 188, and 189 each coordinate ATP. The domain IV, binds dsDNA stretch occupies residues 358-484 (DLEDIEIDTS…IELMNKINKK (127 aa)).

The protein belongs to the DnaA family. As to quaternary structure, oligomerizes as a right-handed, spiral filament on DNA at oriC.

It is found in the cytoplasm. Its function is as follows. Plays an essential role in the initiation and regulation of chromosomal replication. ATP-DnaA binds to the origin of replication (oriC) to initiate formation of the DNA replication initiation complex once per cell cycle. Binds the DnaA box (a 9 base pair repeat at the origin) and separates the double-stranded (ds)DNA. Forms a right-handed helical filament on oriC DNA; dsDNA binds to the exterior of the filament while single-stranded (ss)DNA is stabiized in the filament's interior. The ATP-DnaA-oriC complex binds and stabilizes one strand of the AT-rich DNA unwinding element (DUE), permitting loading of DNA polymerase. After initiation quickly degrades to an ADP-DnaA complex that is not apt for DNA replication. Binds acidic phospholipids. The sequence is that of Chromosomal replication initiator protein DnaA from Borrelia hermsii (strain HS1 / DAH).